The primary structure comprises 225 residues: Ribosomal RNA small subunit methyltransferase G (225 aa).

Residues Gly71, Leu76, 121 to 122, and Arg139 contribute to the S-adenosyl-L-methionine site; that span reads AE. Residues 204-225 form a disordered region; sequence VVEARRATPSNGRGRPGRSSRR.

This sequence belongs to the methyltransferase superfamily. RNA methyltransferase RsmG family.

Its subcellular location is the cytoplasm. In terms of biological role, specifically methylates the N7 position of guanine in position 518 of 16S rRNA. The sequence is that of Ribosomal RNA small subunit methyltransferase G from Mycobacterium sp. (strain JLS).